We begin with the raw amino-acid sequence, 98 residues long: Beta-elicitin MGM-beta (98 aa).

Cystine bridges form between Cys-3/Cys-71, Cys-27/Cys-56, and Cys-51/Cys-95.

The protein belongs to the elicitin family.

The protein localises to the secreted. Its function is as follows. Induces local and distal defense responses (incompatible hypersensitive reaction) in plants from the solanaceae and cruciferae families. Elicits leaf necrosis and causes the accumulation of pathogenesis-related proteins. Might interact with the lipidic molecules of the plasma membrane. The sequence is that of Beta-elicitin MGM-beta from Phytophthora megasperma (Potato pink rot fungus).